Here is a 509-residue protein sequence, read N- to C-terminus: Ethanolamine-phosphate phospho-lyase (509 aa).

Residue Lys279 is modified to N6-(pyridoxal phosphate)lysine. The segment covering Glu451 to Thr474 has biased composition (basic and acidic residues). A disordered region spans residues Glu451–Thr509.

This sequence belongs to the class-III pyridoxal-phosphate-dependent aminotransferase family. Homotetramer. The cofactor is pyridoxal 5'-phosphate.

Its subcellular location is the mitochondrion. The enzyme catalyses phosphoethanolamine + H2O = acetaldehyde + NH4(+) + phosphate. Its function is as follows. Catalyzes the pyridoxal-phosphate-dependent breakdown of phosphoethanolamine, converting it to ammonia, inorganic phosphate and acetaldehyde. This is Ethanolamine-phosphate phospho-lyase (etnppl) from Xenopus laevis (African clawed frog).